The sequence spans 177 residues: Large ribosomal subunit protein uL6 (177 aa).

Positions 156–171 (PYKGKGVRYDTETIRR) are enriched in basic and acidic residues. The interval 156-177 (PYKGKGVRYDTETIRRKEGKKK) is disordered.

The protein belongs to the universal ribosomal protein uL6 family. In terms of assembly, part of the 50S ribosomal subunit.

This protein binds to the 23S rRNA, and is important in its secondary structure. It is located near the subunit interface in the base of the L7/L12 stalk, and near the tRNA binding site of the peptidyltransferase center. This chain is Large ribosomal subunit protein uL6, found in Gluconacetobacter diazotrophicus (strain ATCC 49037 / DSM 5601 / CCUG 37298 / CIP 103539 / LMG 7603 / PAl5).